Consider the following 343-residue polypeptide: Dipeptide transport system permease protein DppC (343 aa).

Helical transmembrane passes span 44 to 64 (LVAM…AFVV), 144 to 164 (LIIA…YGII), 195 to 215 (LALL…LFAW), 259 to 279 (GVIV…EAVL), and 309 to 329 (FQLI…IFFG). In terms of domain architecture, ABC transmembrane type-1 spans 140–329 (LRISLIIALA…VLSLTFIFFG (190 aa)).

Belongs to the binding-protein-dependent transport system permease family. OppBC subfamily. The complex is composed of two ATP-binding proteins (DppD and DppF), two transmembrane proteins (DppB and DppC) and a solute-binding protein (DppA).

It localises to the cell membrane. In terms of biological role, part of the ABC transporter DppABCDF involved in dipeptide transport. Responsible for the translocation of the substrate across the membrane. This chain is Dipeptide transport system permease protein DppC, found in Lactococcus lactis subsp. cremoris (strain MG1363).